Reading from the N-terminus, the 137-residue chain is Nucleoside diphosphate kinase (137 aa).

K9, F57, R85, T91, R102, and N112 together coordinate ATP. Residue H115 is the Pros-phosphohistidine intermediate of the active site.

This sequence belongs to the NDK family. As to quaternary structure, homotetramer. Mg(2+) serves as cofactor.

The protein resides in the cytoplasm. The catalysed reaction is a 2'-deoxyribonucleoside 5'-diphosphate + ATP = a 2'-deoxyribonucleoside 5'-triphosphate + ADP. The enzyme catalyses a ribonucleoside 5'-diphosphate + ATP = a ribonucleoside 5'-triphosphate + ADP. Major role in the synthesis of nucleoside triphosphates other than ATP. The ATP gamma phosphate is transferred to the NDP beta phosphate via a ping-pong mechanism, using a phosphorylated active-site intermediate. The chain is Nucleoside diphosphate kinase from Geobacter sulfurreducens (strain ATCC 51573 / DSM 12127 / PCA).